Here is a 136-residue protein sequence, read N- to C-terminus: Transcription antitermination protein NusB (136 aa).

Belongs to the NusB family.

Involved in transcription antitermination. Required for transcription of ribosomal RNA (rRNA) genes. Binds specifically to the boxA antiterminator sequence of the ribosomal RNA (rrn) operons. The polypeptide is Transcription antitermination protein NusB (Pseudoalteromonas translucida (strain TAC 125)).